A 510-amino-acid chain; its full sequence is Outer spore wall protein 7 (510 aa).

The signal sequence occupies residues 1-23 (MKAVFKVTTALLACVFIARYLVC). The segment at 167-195 (FETDSETEDYEDDENENEDEDEDEDEDDV) is disordered. The span at 169 to 195 (TDSETEDYEDDENENEDEDEDEDEDDV) shows a compositional bias: acidic residues. Tyr354 is modified (phosphotyrosine).

It belongs to the OSW/SHE family.

Its function is as follows. Involved in spore wall assembly. The polypeptide is Outer spore wall protein 7 (Saccharomyces cerevisiae (strain ATCC 204508 / S288c) (Baker's yeast)).